Here is a 251-residue protein sequence, read N- to C-terminus: Electron transfer flavoprotein subunit beta, mitochondrial (251 aa).

This sequence belongs to the ETF beta-subunit/FixA family. In terms of assembly, heterodimer of an alpha and a beta subunit. FAD is required as a cofactor. Requires AMP as cofactor.

Its subcellular location is the mitochondrion matrix. Its function is as follows. The electron transfer flavoprotein serves as a specific electron acceptor for several dehydrogenases, including five acyl-CoA dehydrogenases, glutaryl-CoA and sarcosine dehydrogenase. It transfers the electrons to the main mitochondrial respiratory chain via ETF-ubiquinone oxidoreductase (ETF dehydrogenase). Involved in leucine catabolism and in phytol degradation. The sequence is that of Electron transfer flavoprotein subunit beta, mitochondrial (ETFB) from Arabidopsis thaliana (Mouse-ear cress).